A 656-amino-acid polypeptide reads, in one-letter code: PAN2-PAN3 deadenylation complex subunit pan3 (656 aa).

Disordered regions lie at residues 1–24 and 75–117; these read MAAT…KNRD and SFTP…QQAN. The C3H1-type zinc finger occupies 24-53; sequence DTKETLCRNVVIYGHCRWEDSGCTFNHDQN. The short motif at 63 to 83 is the PABPC-interacting motif-2 (PAM-2) element; the sequence is NSNRRVFNVESPSFTPANQQQ. 2 stretches are compositionally biased toward polar residues: residues 75–96 and 107–117; these read SFTP…SQAA and GTSTPTLQQAN. Residues 251–514 are pseudokinase domain; sequence QLLPNSGLPN…TVETLLGGIT (264 aa). ATP-binding positions include 275-280, Arg-302, 352-359, and 412-413; these read TRNSTC, DFHPLSET, and SK. Positions 515–553 form a coiled coil; sequence THLANFANFVMQESDEKEFHLMRELENGRIARLMFKLSV. The interval 554–656 is knob domain; the sequence is VNERGDSCGV…SKPSATGATI (103 aa).

Belongs to the protein kinase superfamily. PAN3 family. Homodimer. Forms a heterotrimer with a catalytic subunit par-1/pan2 to form the poly(A)-nuclease (PAN) deadenylation complex. Interacts (via PAM-2 motif) with poly(A)-binding protein pabp-1 (via PABC domain), conferring substrate specificity of the enzyme complex.

It localises to the cytoplasm. In terms of biological role, regulatory subunit of the poly(A)-nuclease (PAN) deadenylation complex, one of two cytoplasmic mRNA deadenylases involved in mRNA turnover. PAN specifically shortens poly(A) tails of RNA and the activity is stimulated by poly(A)-binding protein pabp-1. PAN deadenylation is followed by rapid degradation of the shortened mRNA tails by the CCR4-NOT complex. Deadenylated mRNAs are then degraded by two alternative mechanisms, namely exosome-mediated 3'-5' exonucleolytic degradation, or deadenylation-dependent mRNA decaping and subsequent 5'-3' exonucleolytic degradation by rgb-30/xrn1. May also be involved in post-transcriptional maturation of mRNA poly(A) tails. par-2/pan3 acts as a positive regulator for PAN activity, recruiting the catalytic subunit par-1/pan2 to mRNA via its interaction with RNA and with pabp-1. In Neurospora crassa (strain ATCC 24698 / 74-OR23-1A / CBS 708.71 / DSM 1257 / FGSC 987), this protein is PAN2-PAN3 deadenylation complex subunit pan3 (par-2).